The primary structure comprises 227 residues: Cytochrome c oxidase subunit 2 (227 aa).

Over 1–14 (MAYPFQLGLQDATS) the chain is Mitochondrial intermembrane. A helical membrane pass occupies residues 15–45 (PIMEELTNFHDHTLMIVFLISTLVLYIISLM). The Mitochondrial matrix segment spans residues 46-59 (LTTKLTHTSTMDAQ). A helical transmembrane segment spans residues 60–87 (EVETIWTILPAVILILIALPSLRILYMM). The Mitochondrial intermembrane segment spans residues 88–227 (DEINNPALTV…YFEDWSASMI (140 aa)). 6 residues coordinate Cu cation: His-161, Cys-196, Glu-198, Cys-200, His-204, and Met-207. Glu-198 contributes to the Mg(2+) binding site. The residue at position 218 (Tyr-218) is a Phosphotyrosine.

The protein belongs to the cytochrome c oxidase subunit 2 family. Component of the cytochrome c oxidase (complex IV, CIV), a multisubunit enzyme composed of 14 subunits. The complex is composed of a catalytic core of 3 subunits MT-CO1, MT-CO2 and MT-CO3, encoded in the mitochondrial DNA, and 11 supernumerary subunits COX4I, COX5A, COX5B, COX6A, COX6B, COX6C, COX7A, COX7B, COX7C, COX8 and NDUFA4, which are encoded in the nuclear genome. The complex exists as a monomer or a dimer and forms supercomplexes (SCs) in the inner mitochondrial membrane with NADH-ubiquinone oxidoreductase (complex I, CI) and ubiquinol-cytochrome c oxidoreductase (cytochrome b-c1 complex, complex III, CIII), resulting in different assemblies (supercomplex SCI(1)III(2)IV(1) and megacomplex MCI(2)III(2)IV(2)). Found in a complex with TMEM177, COA6, COX18, COX20, SCO1 and SCO2. Interacts with TMEM177 in a COX20-dependent manner. Interacts with COX20. Interacts with COX16. Cu cation is required as a cofactor.

The protein resides in the mitochondrion inner membrane. It catalyses the reaction 4 Fe(II)-[cytochrome c] + O2 + 8 H(+)(in) = 4 Fe(III)-[cytochrome c] + 2 H2O + 4 H(+)(out). Its function is as follows. Component of the cytochrome c oxidase, the last enzyme in the mitochondrial electron transport chain which drives oxidative phosphorylation. The respiratory chain contains 3 multisubunit complexes succinate dehydrogenase (complex II, CII), ubiquinol-cytochrome c oxidoreductase (cytochrome b-c1 complex, complex III, CIII) and cytochrome c oxidase (complex IV, CIV), that cooperate to transfer electrons derived from NADH and succinate to molecular oxygen, creating an electrochemical gradient over the inner membrane that drives transmembrane transport and the ATP synthase. Cytochrome c oxidase is the component of the respiratory chain that catalyzes the reduction of oxygen to water. Electrons originating from reduced cytochrome c in the intermembrane space (IMS) are transferred via the dinuclear copper A center (CU(A)) of subunit 2 and heme A of subunit 1 to the active site in subunit 1, a binuclear center (BNC) formed by heme A3 and copper B (CU(B)). The BNC reduces molecular oxygen to 2 water molecules using 4 electrons from cytochrome c in the IMS and 4 protons from the mitochondrial matrix. The polypeptide is Cytochrome c oxidase subunit 2 (MT-CO2) (Hybomys univittatus (Peter's striped mouse)).